A 406-amino-acid chain; its full sequence is Kelch domain-containing protein 1 (406 aa).

6 Kelch repeats span residues 24–76 (FLYV…CGAC), 80–134 (KLYI…VYKD), 135–181 (RLIY…TKTQ), 208–258 (KGYI…PIAD), 260–307 (KLFL…ACLG), and 311–361 (EIMV…LESQ).

Component of a CRL5 E3 ubiquitin-protein ligase complex, also named ECS (Elongin BC-CUL2/5-SOCS-box protein) complex, composed of CUL5, Elongin BC (ELOB and ELOC), RBX1 and substrate-specific adapter KLHDC1. Widely expressed, with high levels in skeletal muscle, pancreas and liver. Undetectable in peripheral blood leukocytes.

It localises to the cytoplasm. Its subcellular location is the cytosol. It functions in the pathway protein modification; protein ubiquitination. Functionally, substrate-recognition component of a Cul5-RING (CRL5) E3 ubiquitin-protein ligase complex of the DesCEND (destruction via C-end degrons) pathway, which recognizes a C-degron located at the extreme C terminus of target proteins, leading to their ubiquitination and degradation. The C-degron recognized by the DesCEND pathway is usually a motif of less than ten residues and can be present in full-length proteins, truncated proteins or proteolytically cleaved forms. The CRL5(KLHDC1) complex mediates ubiquitination and degradation of truncated SELENOS selenoprotein produced by failed UGA/Sec decoding, which ends with a glycine. The sequence is that of Kelch domain-containing protein 1 from Homo sapiens (Human).